The sequence spans 145 residues: Monooxygenase AacuP (145 aa).

The protein belongs to the avfA family.

It functions in the pathway secondary metabolite biosynthesis. Monooxygenase; part of the gene cluster that mediates the biosynthesis of the tetrahydroxanthone dimer secalonic acid D. The pathway begins with the synthesis of atrochrysone thioester by the polyketide synthase AacuL. The atrochrysone carboxyl ACP thioesterase AacuM then breaks the thioester bond and releases the atrochrysone carboxylic acid from AacuL. Atrochrysone carboxylic acid is decarboxylated by the decarboxylase AacuI, and oxidized by the anthrone oxygenase AacuG to yield emodin. Emodin is then reduced to emodin hydroquinone by a yet unidentified oxidoreductase. A-ring reduction by the short chain dehydrogenase AacuN, dehydration by the scytalone dehydratase-like protein AacuK and probable spontaneous re-oxidation, results in overall deoxygenation to chrysophanol. Baeyer-Villiger oxidation by the Baeyer-Villiger monooxygenase (BVMO) AacuH then yields monodictyphenone. Monodictyphenone is transformed into compounds with the tetrahydroxanthone skeleton via methylesterification by the methyltransferase AacuQ, followed by the action of the flavin-dependent monooxygenase AacuC, the isomerase AacuP, and the short chain dehydrogenase/reductase AacuF or AacuD. AacuF and AacuD should accept the same compound as a substrate but perform the ketoreduction with a different stereoselectivity, thus yielding blennolides B and A, respectively. In the final step of the biosynthesis, the cytochrome P450 monooxygenase AacuE accepts blennolide B and/or blennolide A to conduct the dimerization reaction to furnish the tetrahydroxanthone dimers, secalonic acids D, B, and F. This Aspergillus aculeatus (strain ATCC 16872 / CBS 172.66 / WB 5094) protein is Monooxygenase AacuP.